The sequence spans 1597 residues: Protein STU1 (1597 aa).

Disordered regions lie at residues 220-265 (GNSS…PSSS), 519-958 (DKVN…RPIH), 1005-1154 (DAEA…ELNT), and 1307-1332 (SQRPPDKRTSRAFLEAPSPSPDSSLV). Basic and acidic residues predominate over residues 535-552 (APRESLKEVMRRSRESSV). Low complexity predominate over residues 577-605 (SSGLVGRSLSGSNLTDRSNRLSSTSTSSR). Composition is skewed to polar residues over residues 610–622 (AVSDSTRPTQMTR) and 632–645 (PSLTRSSRDQSLTR). 2 stretches are compositionally biased toward basic and acidic residues: residues 660–673 (GSRELPKQRVDQNR) and 694–708 (ESSRQSRESSLDPSR). The span at 709–726 (ESSLAPSVHSSTAISRES) shows a compositional bias: polar residues. A compositionally biased stretch (low complexity) spans 765–781 (EETMNEVTTAEATATTA). Composition is skewed to polar residues over residues 791–801 (PRESTPPNSSP) and 808–822 (PATQGVSTSPATGKS). Residues 832 to 846 (ELSRDLNGESKHLKE) are compositionally biased toward basic and acidic residues. Polar residues-rich tracts occupy residues 918–933 (DSQSHGADSADLQSEP), 1013–1025 (TEQTEAVKTSDTA), and 1036–1045 (NSEQGPSTEP). Positions 1081-1091 (ASDEIETDHTK) are enriched in basic and acidic residues. Residues 1108 to 1119 (EPMEICDSDNDA) show a composition bias toward acidic residues. Residues 1122 to 1139 (NGTNPDTKCQDQQDSTTP) are compositionally biased toward polar residues. An HEAT repeat occupies 1537-1573 (PSYETQLLALITELISDPDPLVRRVTVGLVVRVLRVS).

This sequence belongs to the CLASP family. In terms of assembly, interacts with microtubules.

The protein localises to the cytoplasm. Its subcellular location is the cytoskeleton. It localises to the nucleus. It is found in the spindle. Microtubule binding protein that promotes the stabilization of dynamic microtubules. Required for mitotic spindle formation. In Yarrowia lipolytica (strain CLIB 122 / E 150) (Yeast), this protein is Protein STU1 (STU1).